Consider the following 111-residue polypeptide: Probable monothiol glutaredoxin 2 (111 aa).

The region spanning 7 to 109 (LKFIQNAIKK…KMLKDETKLI (103 aa)) is the Glutaredoxin domain. A glutathione-binding site is contributed by Lys-24. Cys-32 provides a ligand contact to [2Fe-2S] cluster. Glutathione is bound by residues Arg-61, Phe-73, and 86-87 (CD).

Belongs to the glutaredoxin family. Monothiol subfamily.

In Rickettsia typhi (strain ATCC VR-144 / Wilmington), this protein is Probable monothiol glutaredoxin 2 (grxC2).